The primary structure comprises 331 residues: Barley B recombinant-like protein D (331 aa).

Residues 43 to 101 (ALMNDRDNAIRERDHALAEKKAAIAERDMAFTQRDAAMAERNAAVVERDNALAALELAR) are a coiled coil. The segment at 51 to 86 (AIRERDHALAEKKAAIAERDMAFTQRDAAMAERNAA) is alanine-zipper. A compositionally biased stretch (polar residues) spans 104–122 (GLNMNNGNGFPQGSLSGSK). Disordered stretches follow at residues 104-140 (GLNM…PLQL) and 156-205 (AYPI…VGMS).

This sequence belongs to the BBR/BPC family. As to quaternary structure, homodimer. Heterodimer.

The protein resides in the nucleus. Transcriptional regulator that specifically binds to GA-rich elements (GAGA-repeats) present in regulatory sequences of genes involved in developmental processes. This is Barley B recombinant-like protein D from Oryza sativa subsp. japonica (Rice).